The chain runs to 162 residues: F protein (162 aa).

The interval 1-23 (MSTNPKPQRKKPNVTPTVAHRTS) is disordered. Polar residues predominate over residues 14 to 23 (VTPTVAHRTS).

It is found in the host cytoplasm. Its subcellular location is the host perinuclear region. Contributes to the RIGI-mediated inhibition of type I interferon production. The polypeptide is F protein (Homo sapiens (Human)).